A 198-amino-acid polypeptide reads, in one-letter code: Recombination protein RecR (198 aa).

The C4-type zinc-finger motif lies at 57–72 (CSVCGHITDRDPCYIC). Residues 80 to 175 (SVVCVVQEPK…KVTRIAHGLP (96 aa)) form the Toprim domain.

It belongs to the RecR family.

Its function is as follows. May play a role in DNA repair. It seems to be involved in an RecBC-independent recombinational process of DNA repair. It may act with RecF and RecO. This chain is Recombination protein RecR, found in Bacillus anthracis (strain A0248).